Here is a 353-residue protein sequence, read N- to C-terminus: 26S proteasome non-ATPase regulatory subunit 8 (353 aa).

The segment at 1-25 is disordered; it reads MFIKGRAAKTPRGEPRRSSRGGRKL. The PCI domain occupies 165–334; the sequence is PSFERYMAQL…QQKPEDSTIP (170 aa). Lys-300 is covalently cross-linked (Glycyl lysine isopeptide (Lys-Gly) (interchain with G-Cter in SUMO2)).

The protein belongs to the proteasome subunit S14 family. As to quaternary structure, component of the 19S proteasome regulatory particle complex. The 26S proteasome consists of a 20S core particle (CP) and two 19S regulatory subunits (RP). The regulatory particle is made of a lid composed of 9 subunits including PSMD8, a base containing 6 ATPases and few additional components. Interacts with DDI2. Interacts with TASOR. As to expression, expressed in the Sertoli cells of the testis.

Component of the 26S proteasome, a multiprotein complex involved in the ATP-dependent degradation of ubiquitinated proteins. This complex plays a key role in the maintenance of protein homeostasis by removing misfolded or damaged proteins, which could impair cellular functions, and by removing proteins whose functions are no longer required. Therefore, the proteasome participates in numerous cellular processes, including cell cycle progression, apoptosis, or DNA damage repair. This Mus musculus (Mouse) protein is 26S proteasome non-ATPase regulatory subunit 8 (Psmd8).